The primary structure comprises 485 residues: Retron Mx162 reverse transcriptase (485 aa).

Positions 1–33 (MTARLDPFVPAASPQAVPTPELTAPSSDAAAKR) are disordered. Positions 167-407 (RWFAFHREVD…TRQRVTGLVV (241 aa)) constitute a Reverse transcriptase domain. Residues Asp250, Asp346, and Asp347 each coordinate Mg(2+).

It belongs to the bacterial reverse transcriptase family.

The enzyme catalyses DNA(n) + a 2'-deoxyribonucleoside 5'-triphosphate = DNA(n+1) + diphosphate. With respect to regulation, msDNA synthesis is inhibited by rifampicin and chloramphenicol. Reverse transcriptase (RT) responsible for synthesis of msDNA-Mx162 (a branched molecule with RNA linked by a 2',5'-phosphodiester bond to ssDNA). The retron transcript serves as primer (from a conserved internal G residue) and template for the reaction, and codes for the RT. The retron is involved in antiviral defense. This is Retron Mx162 reverse transcriptase from Myxococcus xanthus.